Reading from the N-terminus, the 65-residue chain is Small ribosomal subunit protein bS21 (65 aa).

It belongs to the bacterial ribosomal protein bS21 family.

The polypeptide is Small ribosomal subunit protein bS21 (Cytophaga hutchinsonii (strain ATCC 33406 / DSM 1761 / CIP 103989 / NBRC 15051 / NCIMB 9469 / D465)).